The following is a 286-amino-acid chain: Pantothenate synthetase (286 aa).

ATP is bound at residue 30–37 (MGCFHQGH). H37 (proton donor) is an active-site residue. Q61 contacts (R)-pantoate. Q61 contacts beta-alanine. 147-150 (GEKD) is a binding site for ATP. Q153 contacts (R)-pantoate. Residue 184–187 (MSSR) coordinates ATP.

This sequence belongs to the pantothenate synthetase family. In terms of assembly, homodimer.

Its subcellular location is the cytoplasm. The catalysed reaction is (R)-pantoate + beta-alanine + ATP = (R)-pantothenate + AMP + diphosphate + H(+). It participates in cofactor biosynthesis; (R)-pantothenate biosynthesis; (R)-pantothenate from (R)-pantoate and beta-alanine: step 1/1. Functionally, catalyzes the condensation of pantoate with beta-alanine in an ATP-dependent reaction via a pantoyl-adenylate intermediate. The protein is Pantothenate synthetase of Desulfotalea psychrophila (strain LSv54 / DSM 12343).